Here is a 572-residue protein sequence, read N- to C-terminus: NADP-dependent malic enzyme (572 aa).

Met-1 bears the N-acetylmethionine mark. Residue Tyr-102 is the Proton donor of the active site. Residue Arg-155 coordinates NADP(+). Lys-173 (proton acceptor) is an active-site residue. 3 residues coordinate a divalent metal cation: Glu-245, Asp-246, and Asp-269. NADP(+) contacts are provided by residues Asp-269 and 301–318 (GAGE…MALE). A Phosphoserine modification is found at Ser-336. Position 408 (Asn-408) interacts with NADP(+).

The protein belongs to the malic enzymes family. In terms of assembly, homotetramer. The cofactor is Mg(2+). Requires Mn(2+) as cofactor. Expressed in all tissues tested including liver, placenta and white adipose tissue.

The protein localises to the cytoplasm. The enzyme catalyses (S)-malate + NADP(+) = pyruvate + CO2 + NADPH. It catalyses the reaction oxaloacetate + H(+) = pyruvate + CO2. Catalyzes the oxidative decarboxylation of (S)-malate in the presence of NADP(+) and divalent metal ions, and decarboxylation of oxaloacetate. In Homo sapiens (Human), this protein is NADP-dependent malic enzyme.